Consider the following 685-residue polypeptide: Sodium-dependent phosphate transporter 1-B (685 aa).

6 consecutive transmembrane segments (helical) span residues 21-41, 66-86, 106-126, 162-182, 207-227, and 234-254; these read IMAP…VLAF, ACIL…AKVS, LMAG…AASF, IVLS…LLFF, ACTI…LLGF, and GIIL…WFFV. The disordered stretch occupies residues 489-511; it reads EGCIEDVVTDRKSSSSSLEERHD. Basic and acidic residues predominate over residues 496–511; that stretch reads VTDRKSSSSSLEERHD. 4 helical membrane passes run 517-537, 565-585, 606-626, and 656-676; these read VSLL…FAHG, ATPI…LWVW, FSIE…GLPI, and IFLA…GIMA.

Belongs to the inorganic phosphate transporter (PiT) (TC 2.A.20) family.

The protein localises to the membrane. Sodium-phosphate symporter which plays a fundamental housekeeping role in phosphate transport. This chain is Sodium-dependent phosphate transporter 1-B (slc20a1-b), found in Xenopus laevis (African clawed frog).